A 1148-amino-acid polypeptide reads, in one-letter code: MSGSFTESFADDGKLLLCVAENGHSFEFQCSETTSVESVMRFVESVSGIALSDQLLLSLDMKLEPQKLLSAFGLPASDREVFVFNKAMLQSNSHPPSPEDVDLQDVADALPPASLHEHHPLDDASDPALKALPLYERQFRYHFHKGRTIYNCTVVKHENCERLTREQKVQQRAVEVATRNLEQYYRVIYQNFLEFMKRYKHQHRLHSDLLMNFGRDIEKLRSAKIHPYLQTESRKCLLDFVKEDNLKKAVENCASSHRQFENKIAQFQQMFVEVKRKVEELFACRASLSMKNLEVTVKDHERFIDEEKSIMQSLSKDVNTVKKLVDDCMSSQVSSSLRPHDAVSALGPMYEVHDKNHLPKMQACYNSISELLDFCKNKKNEMNNFVHGYMQKITYVTYIIKDAKLQFPVFREAMVRQDDLFADLKLVRGVGPAYRACLAEVVRRKASMKLYMGMAGQLAEKLAMKRETEVRKREEFLKTHGPFVPRDVLASMGLYDTPTQCDVNVAPYDTSLLNIEISDVDRYAPEFLVGLHSKIASLKSSLTMSGDSSLSAEPEEIGIDTFDKDNFDDILAASELIEIAGTSKMEVENAKLKADLASAISRICSLGPQFEYEVLDESEVENVLKNAADKTAEALQAKDEYEKHLLLMLKEKQMHCDSYEKRIRELEQRLSDEYLQGQRHNNKDVSGLNLMHEKVSEYKAEASSDVEGNKTHVSGSEPMDEVSCVSNLTSKQPCKAREGMDENMVDSSQVLSQPLDSSMLESQQNNEKGGKDSEAGEMGVFLSNSSTAESPQKSLDDNVATGRGLDAKDSGDIILELRNELMEKSNKLSEMESKLNGAMEEVSNLSRELETNQKLLEESQMNCAHLENCLHEAREEAQTHLCAADRRASQYTALRASAVKMRGLFERFRSSVCAGSGIADFADSLRTLAQALANSVNENEDDGTTEFRKCIRVLADKVSFLSKHREELLEKCQNLEATSEQTRKDLEEKKELVKTLYTKHQLGKQANKEKISFGRLEVHEIAAFVLNQAGHYEAINRNCPNYYLSSESEALFTDHLPSRPTYIVGQIVHIERQIVKLPSQLSASASPEAGKTHHLCSDQGSRTLASSSISTSTSATTTSNPYGLSSGCEYFIVTIAMLPDTAIHQQAS.

Positions 567–570 (FDDI) match the AIM (Atg8-family-interacting motif) motif. A compositionally biased stretch (basic and acidic residues) spans 699–710 (KAEASSDVEGNK). Disordered stretches follow at residues 699 to 727 (KAEASSDVEGNKTHVSGSEPMDEVSCVSN), 754 to 777 (PLDSSMLESQQNNEKGGKDSEAGE), and 784 to 803 (NSSTAESPQKSLDDNVATGR). 2 stretches are compositionally biased toward polar residues: residues 754 to 767 (PLDSSMLESQQNNE) and 784 to 793 (NSSTAESPQK). Coiled-coil stretches lie at residues 816 to 868 (ELRN…HLEN) and 956 to 996 (DKVS…VKTL). Threonine 851 carries the phosphothreonine modification. Residues 1130 to 1133 (YFIV) carry the AIM (Atg8-family-interacting motif) motif.

Belongs to the ATG11 family. In terms of assembly, homodimer. Interacts with ATG8E, ATG13A and ATG101. Binds to ATG8E on autophagic vesicles.

Its subcellular location is the cytoplasmic vesicle. The protein resides in the autophagosome. Accessory protein involved in autophagy. Acts as a scaffold protein of the ATG1-ATG13 complex for faithful delivery of autophagic vesicles to the vacuole. Involved in the stress-induced phosphorylation of ATG1A for turnover of ATG1-ATG13 complex and proper ATG1-ATG13 complex assembly or activity. Required for selective mitophagy. Required for senescence-induced breakdown of mitochondria-resident proteins and mitochondrial vesicles. Seems not essential for ATG8-mediated autophagy. This chain is Autophagy-related protein 11, found in Arabidopsis thaliana (Mouse-ear cress).